Reading from the N-terminus, the 310-residue chain is Haloalkane dehalogenase (310 aa).

Residues Val49–Gly295 enclose the AB hydrolase-1 domain. Asp124 acts as the Nucleophile in catalysis. Chloride is bound by residues Trp125 and Trp175. Asp260 acts as the Proton donor in catalysis. The active-site Proton acceptor is His289.

Belongs to the haloalkane dehalogenase family. Type 1 subfamily. In terms of assembly, monomer.

The catalysed reaction is 1-haloalkane + H2O = a halide anion + a primary alcohol + H(+). It carries out the reaction 1,2-dichloroethane + H2O = 2-chloroethanol + chloride + H(+). Its pathway is xenobiotic degradation; 1,2-dichloroethane degradation; glycolate from 1,2-dichloroethane: step 1/4. With respect to regulation, inhibited by thiol reagents such as p-chloromercuribenzoate and iodoacetamide. Functionally, catalyzes hydrolytic cleavage of carbon-halogen bonds in halogenated aliphatic compounds, leading to the formation of the corresponding primary alcohols, halide ions and protons. Has a broad substrate specificity, which includes terminally mono- and di- chlorinated and brominated alkanes (up to C4 only). The highest activity was found with 1,2-dichloroethane, 1,3-dichloropropane, and 1,2-dibromoethane. The sequence is that of Haloalkane dehalogenase (dhlA) from Xanthobacter autotrophicus.